The primary structure comprises 130 residues: Keratin, high-sulfur matrix protein, IIIA3A (130 aa).

As to expression, wool.

Functionally, the keratin products of mammalian epidermal derivatives such as wool and hair consist of microfibrils embedded in a rigid matrix of other proteins. The matrix proteins include the high-sulfur and high-tyrosine keratins, having molecular weights of 6-20 kDa, whereas the microfibrils contain the larger, low-sulfur keratins (40-56 kDa). The protein is Keratin, high-sulfur matrix protein, IIIA3A of Ovis aries (Sheep).